The primary structure comprises 211 residues: N-(5'-phosphoribosyl)anthranilate isomerase (211 aa).

The protein belongs to the TrpF family.

The catalysed reaction is N-(5-phospho-beta-D-ribosyl)anthranilate = 1-(2-carboxyphenylamino)-1-deoxy-D-ribulose 5-phosphate. It functions in the pathway amino-acid biosynthesis; L-tryptophan biosynthesis; L-tryptophan from chorismate: step 3/5. In Pseudomonas paraeruginosa (strain DSM 24068 / PA7) (Pseudomonas aeruginosa (strain PA7)), this protein is N-(5'-phosphoribosyl)anthranilate isomerase.